Reading from the N-terminus, the 94-residue chain is Conotoxin Gla-MrII (94 aa).

An N-terminal signal peptide occupies residues 1–25 (MFGHTSVSFLLLSIVALGMVATVIC). Residues glutamate 30, glutamate 34, glutamate 37, glutamate 40, and glutamate 41 each carry the 4-carboxyglutamate modification. Positions 78–94 (STHMQKRFLRMPRDLAD) are excised as a propeptide.

The protein belongs to the conotoxin I2 superfamily. Contains 4 disulfide bonds. In terms of tissue distribution, expressed by the venom duct.

The protein localises to the secreted. The chain is Conotoxin Gla-MrII from Conus marmoreus (Marble cone).